We begin with the raw amino-acid sequence, 200 residues long: Peptidyl-tRNA hydrolase (200 aa).

Residue Y15 coordinates tRNA. H20 serves as the catalytic Proton acceptor. TRNA is bound by residues F66, N68, and N114.

Belongs to the PTH family. As to quaternary structure, monomer.

The protein localises to the cytoplasm. It carries out the reaction an N-acyl-L-alpha-aminoacyl-tRNA + H2O = an N-acyl-L-amino acid + a tRNA + H(+). In terms of biological role, hydrolyzes ribosome-free peptidyl-tRNAs (with 1 or more amino acids incorporated), which drop off the ribosome during protein synthesis, or as a result of ribosome stalling. Catalyzes the release of premature peptidyl moieties from peptidyl-tRNA molecules trapped in stalled 50S ribosomal subunits, and thus maintains levels of free tRNAs and 50S ribosomes. The chain is Peptidyl-tRNA hydrolase from Ralstonia pickettii (strain 12J).